We begin with the raw amino-acid sequence, 510 residues long: NAD(P)H-quinone oxidoreductase subunit 2 A, chloroplastic (510 aa).

A run of 13 helical transmembrane segments spans residues 24-44 (LLLFHGSFIFPECILIFGLIL), 59-79 (WFYFISSTSLVMSITALLFRW), 99-119 (IFQFLILLCSTLCIPLSVEYI), 124-144 (MAITEFLLFVLTATLGGMFLC), 149-169 (LITIFVAPECFSLCSYLLSGY), 183-203 (YLLMGGASSSILVHGFSWLYG), 229-249 (ISIALLSITVGIGFKLSPAPF), 295-315 (WHLLLEILAILSMILGNLIAI), 323-343 (MLAYSSIGQIGYVIIGIIVGD), 347-367 (GYASMITYMLFYISMNLGTFA), 395-415 (ALSSALCLLSLGGIPPLAGFF), 418-438 (LHLFWCGWQAGLYFLVSIGLL), and 484-504 (MIVCVIASTIPGISMNPIIAI).

It belongs to the complex I subunit 2 family. As to quaternary structure, NDH is composed of at least 16 different subunits, 5 of which are encoded in the nucleus.

It localises to the plastid. Its subcellular location is the chloroplast thylakoid membrane. It carries out the reaction a plastoquinone + NADH + (n+1) H(+)(in) = a plastoquinol + NAD(+) + n H(+)(out). The catalysed reaction is a plastoquinone + NADPH + (n+1) H(+)(in) = a plastoquinol + NADP(+) + n H(+)(out). In terms of biological role, NDH shuttles electrons from NAD(P)H:plastoquinone, via FMN and iron-sulfur (Fe-S) centers, to quinones in the photosynthetic chain and possibly in a chloroplast respiratory chain. The immediate electron acceptor for the enzyme in this species is believed to be plastoquinone. Couples the redox reaction to proton translocation, and thus conserves the redox energy in a proton gradient. The polypeptide is NAD(P)H-quinone oxidoreductase subunit 2 A, chloroplastic (Amborella trichopoda).